The following is a 728-amino-acid chain: MKRGSKRESGGPLTEEPEPLFSEENRSLQDGNPLDESDSEESQYSGLEDSGTDSSDDEEDHSSEEVQDPGKSPKEIIKVPHRTSKSQADSPADEEDQPNEIKEYENDSSDEEDIRNTVGNIPMEWYKDLPHIGYDLDGRKIFKPLRSKDQLEEFLDKMENPDYWRTVHDKKTGQDIKLTDEQVDLVERLQKGQFGDLNYDPYQPAIDFFTHETMIHPVTNRPADKRSFIPSLIEKEKVSKLVHAIKMGWIQPRKPRDDAPTYYDLWAKEDPNAILGRHKMHVPAPKLPLPGHEQSYNPPPEYLMSEEERLAWEQQDPEDRKLPFLPQRFNCLRAVPGYARFIHERFERCLDLYLCPRQRKMRVNVDPEDLIPKLPKPRDLQPFPTIQSMIYKGHKDLVRCISVSPSGQWLVSGSDDCSVRFWEVSTGRCMKSVVLEGAVKSISWNPNPVLVLVAACVDRSVVLINPGLGDRLLCSATDQHISGYQPPEEEVQQPVTWEEAEGSEYSSGLRLWIKHQKEVKQVTFHARGDYFAVVLPDNGNSQVLIHQLSRRRSQNPFRKNKGQVQKVLFHPTRPFFFVATQRYVRVYNLLKQELTKKLLTNCKWVSSIAVHPAGDNLICGSYDSKLAWFDMDLSTKPYKVLRHHKKALRAVSFHKSYPLFASGSDDASVIVCHGMVYNDLLQNPLIVPVKVLRGHAIHRDLGVLDVMFHPTQPWVFSSGADGTIRLFT.

The interval 1-114 is disordered; the sequence is MKRGSKRESG…ENDSSDEEDI (114 aa). Positions 50-67 are enriched in acidic residues; that stretch reads SGTDSSDDEEDHSSEEVQ. WD repeat units follow at residues 393–432, 434–474, 514–556, 559–597, 600–639, 643–682, and 698–728; these read GHKDLVRCISVSPSGQWLVSGSDDCSVRFWEVSTGRCMKS, VLEG…RLLC, KHQK…SQNP, KNKGQVQKVLFHPTRPFFFVATQRYVRVYNLLKQELTKK, TNCKWVSSIAVHPAGDNLICGSYDSKLAWFDMDLSTKPYK, HHKKALRAVSFHKSYPLFASGSDDASVIVCHGMVYNDLLQ, and HRDLGVLDVMFHPTQPWVFSSGADGTIRLFT.

This sequence belongs to the WD repeat BOP1/ERB1 family. Component of the PeBoW complex, composed of bop1, pes1 and wdr12. The complex is held together by bop1, which interacts with pes1 via its N-terminal domain and with wdr12 via a high-affinity interaction between the seven-bladed beta-propeller domains of the 2 proteins. The PeBoW complex associates with the 66S pre-ribosome.

Its subcellular location is the nucleus. The protein localises to the nucleolus. It is found in the nucleoplasm. In terms of biological role, component of the PeBoW complex, which is required for maturation of 28S and 5.8S ribosomal RNAs and formation of the 60S ribosome. This Xenopus laevis (African clawed frog) protein is Ribosome biogenesis protein bop1-B (bop1-b).